A 215-amino-acid polypeptide reads, in one-letter code: MNKYSIYVDHTLLKPDASLDEIHNLCEEAEENEFYSVCINPCFIKVAKHYLLETPVKICTVVGFPLGANTTETKVFETRNAIALGADEIDMVININQLKSANREYCLQEINEVKKACSDKVLKVIVETALLDQEQKEFAARIILESDADFIKTSTGFAKEGAKLEDIILWKQILGDAKQIKAAGGIKNLDDFKAFIDAGATRIGTSSAIKILNNQ.

Asp90 serves as the catalytic Proton donor/acceptor. Residue Lys152 is the Schiff-base intermediate with acetaldehyde of the active site. Residue Lys181 is the Proton donor/acceptor of the active site.

The protein belongs to the DeoC/FbaB aldolase family. DeoC type 1 subfamily.

It is found in the cytoplasm. It carries out the reaction 2-deoxy-D-ribose 5-phosphate = D-glyceraldehyde 3-phosphate + acetaldehyde. The protein operates within carbohydrate degradation; 2-deoxy-D-ribose 1-phosphate degradation; D-glyceraldehyde 3-phosphate and acetaldehyde from 2-deoxy-alpha-D-ribose 1-phosphate: step 2/2. In terms of biological role, catalyzes a reversible aldol reaction between acetaldehyde and D-glyceraldehyde 3-phosphate to generate 2-deoxy-D-ribose 5-phosphate. The chain is Deoxyribose-phosphate aldolase from Ureaplasma urealyticum serovar 10 (strain ATCC 33699 / Western).